An 86-amino-acid chain; its full sequence is MALNIKDPEVDRLAAELADRLHTSKTAAIRHALSAQLAFLESRAGDREAQLLDILRTEIWPLLADRSPITKLEREQILGYDPATGV.

Possibly the antitoxin component of a type II toxin-antitoxin (TA) system. Its cognate toxin is VapC36 (Potential). The protein is Putative antitoxin VapB36 (vapB36) of Mycobacterium tuberculosis (strain CDC 1551 / Oshkosh).